Here is a 114-residue protein sequence, read N- to C-terminus: Somatostatin-1A (114 aa).

The signal sequence occupies residues 1–24; it reads MLSTRIQCALALLSLALAVCSVSA. Residues 25–88 constitute a propeptide that is removed on maturation; sequence APTDAKLRQL…KDEVRLELER (64 aa). C103 and C114 are disulfide-bonded.

The protein belongs to the somatostatin family.

It localises to the secreted. In terms of biological role, somatostatin inhibits the release of somatotropin. The protein is Somatostatin-1A (sst1a) of Carassius auratus (Goldfish).